We begin with the raw amino-acid sequence, 433 residues long: CinA-like protein (433 aa).

This sequence belongs to the CinA family.

The sequence is that of CinA-like protein from Prochlorococcus marinus (strain MIT 9515).